Here is a 42-residue protein sequence, read N- to C-terminus: Aspartate-semialdehyde dehydrogenase leader peptide (42 aa).

This Streptococcus mutans serotype c (strain ATCC 700610 / UA159) protein is Aspartate-semialdehyde dehydrogenase leader peptide.